We begin with the raw amino-acid sequence, 199 residues long: Type-4 uracil-DNA glycosylase (199 aa).

[4Fe-4S] cluster contacts are provided by Cys-14 and Cys-17. Uracil-binding positions include 41–43 (GEA), Phe-55, and Asn-81. The pseudo-FCL stretch occupies residues 77–114 (VYITNVLKCRPPNNRDPTPEEVEKCGDYLVRQLEAIRP). Residues Cys-85 and Cys-101 each contribute to the [4Fe-4S] cluster site. Residue His-163 coordinates uracil.

This sequence belongs to the uracil-DNA glycosylase (UDG) superfamily. Type 4 (UDGa) family.

It catalyses the reaction Hydrolyzes single-stranded DNA or mismatched double-stranded DNA and polynucleotides, releasing free uracil.. Its activity is regulated as follows. Product-inhibited by both uracil and apurinic/apyrimidinic sites. Removes uracil bases that are present in DNA as a result of either deamination of cytosine or misincorporation of dUMP instead of dTMP. Can remove uracil from double-stranded DNA containing either a U/G or U/A base pair as well as from single-stranded DNA. The chain is Type-4 uracil-DNA glycosylase from Archaeoglobus fulgidus (strain ATCC 49558 / DSM 4304 / JCM 9628 / NBRC 100126 / VC-16).